The primary structure comprises 252 residues: Orotidine 5'-phosphate decarboxylase (252 aa).

Residues Asp24, Lys46, Asp73 to Thr82, Thr137, Arg199, Gln208, Gly228, and Arg229 each bind substrate. The Proton donor role is filled by Lys75.

This sequence belongs to the OMP decarboxylase family. Type 1 subfamily. In terms of assembly, homodimer.

The enzyme catalyses orotidine 5'-phosphate + H(+) = UMP + CO2. The protein operates within pyrimidine metabolism; UMP biosynthesis via de novo pathway; UMP from orotate: step 2/2. Catalyzes the decarboxylation of orotidine 5'-monophosphate (OMP) to uridine 5'-monophosphate (UMP). The protein is Orotidine 5'-phosphate decarboxylase of Moorella thermoacetica (strain ATCC 39073 / JCM 9320).